Here is a 102-residue protein sequence, read N- to C-terminus: NADH-quinone oxidoreductase subunit K 1 (102 aa).

Transmembrane regions (helical) follow at residues 6-26, 31-51, and 65-85; these read LNAY…GVLV, LAIL…FVAF, and FLVI…TVLL.

This sequence belongs to the complex I subunit 4L family. As to quaternary structure, NDH-1 is composed of 14 different subunits. Subunits NuoA, H, J, K, L, M, N constitute the membrane sector of the complex.

It localises to the cell membrane. The catalysed reaction is a quinone + NADH + 5 H(+)(in) = a quinol + NAD(+) + 4 H(+)(out). Its function is as follows. NDH-1 shuttles electrons from NADH, via FMN and iron-sulfur (Fe-S) centers, to quinones in the respiratory chain. The immediate electron acceptor for the enzyme in this species is believed to be a menaquinone. Couples the redox reaction to proton translocation (for every two electrons transferred, four hydrogen ions are translocated across the cytoplasmic membrane), and thus conserves the redox energy in a proton gradient. This is NADH-quinone oxidoreductase subunit K 1 from Symbiobacterium thermophilum (strain DSM 24528 / JCM 14929 / IAM 14863 / T).